We begin with the raw amino-acid sequence, 173 residues long: Small ribosomal subunit protein uS7 (173 aa).

This sequence belongs to the universal ribosomal protein uS7 family. In terms of assembly, part of the 30S ribosomal subunit. Contacts proteins S9 and S11.

Functionally, one of the primary rRNA binding proteins, it binds directly to 16S rRNA where it nucleates assembly of the head domain of the 30S subunit. Is located at the subunit interface close to the decoding center, probably blocks exit of the E-site tRNA. The sequence is that of Small ribosomal subunit protein uS7 from Orientia tsutsugamushi (strain Ikeda) (Rickettsia tsutsugamushi).